Here is a 701-residue protein sequence, read N- to C-terminus: Glycine--tRNA ligase beta subunit (701 aa).

This sequence belongs to the class-II aminoacyl-tRNA synthetase family. Tetramer of two alpha and two beta subunits.

Its subcellular location is the cytoplasm. The enzyme catalyses tRNA(Gly) + glycine + ATP = glycyl-tRNA(Gly) + AMP + diphosphate. This chain is Glycine--tRNA ligase beta subunit, found in Anaeromyxobacter dehalogenans (strain 2CP-C).